The sequence spans 621 residues: Autonomous transposable element EN-1 mosaic protein (621 aa).

Disordered stretches follow at residues 1–119 (MFRM…PPRR), 428–447 (YTRR…PSAR), 498–530 (QQPP…TSVQ), and 549–621 (RQPG…PPTE). Polar residues-rich tracts occupy residues 27–39 (EGTT…QEQL) and 47–61 (RGSS…TTSR). Residues 82–102 (AAVDAEAEEAAAELDDGEETS) are compositionally biased toward acidic residues. Over residues 570–594 (PPRGQSQSPGLPSHSPGSGSGSHHA) the composition is skewed to low complexity.

This protein has most probably three functions; the mutator (M) function, for excision and transposition; the suppressor (S) function, which inhibits residual gene activity of certain alleles in which inhibitor elements are integrated; an activator (A) function is proposed, because inactive SPM can be activated by a second SPM. This chain is Autonomous transposable element EN-1 mosaic protein, found in Zea mays (Maize).